Here is a 413-residue protein sequence, read N- to C-terminus: Divalent metal cation transporter MntH (413 aa).

The next 11 membrane-spanning stretches (helical) occupy residues L19–A39, A46–I66, V94–I114, L122–I142, V156–Q176, A196–H216, I241–F261, I290–G310, A329–L349, V350–F370, and I389–L409.

This sequence belongs to the NRAMP family.

It localises to the cell inner membrane. H(+)-stimulated, divalent metal cation uptake system. This Klebsiella pneumoniae subsp. pneumoniae (strain ATCC 700721 / MGH 78578) protein is Divalent metal cation transporter MntH.